A 912-amino-acid polypeptide reads, in one-letter code: Non-lysosomal glucosylceramidase (912 aa).

The segment at 886 to 912 is disordered; sequence HKKNSSRPAVTQGTAPSQPECGPKRSL. Residues 891–902 are compositionally biased toward polar residues; the sequence is SRPAVTQGTAPS.

It belongs to the non-lysosomal glucosylceramidase family.

It localises to the endoplasmic reticulum membrane. Its subcellular location is the golgi apparatus membrane. It catalyses the reaction a beta-D-glucosyl-(1&lt;-&gt;1')-N-acylsphing-4-enine + H2O = an N-acylsphing-4-enine + D-glucose. The catalysed reaction is a beta-D-galactosyl-(1&lt;-&gt;1')-N-acylsphing-4-enine + H2O = an N-acylsphing-4-enine + D-galactose. The enzyme catalyses beta-D-glucosyl-(1-&gt;3)-O-lithocholate + H2O = lithocholate + D-glucose. It carries out the reaction beta-D-glucosyl-(1-&gt;3)-O-chenodeoxycholate + H2O = chenodeoxycholate + D-glucose. It catalyses the reaction a di-trans,poly-cis-dolichyl beta-D-glucosyl phosphate + chenodeoxycholate = beta-D-glucosyl-(1-&gt;3)-O-chenodeoxycholate + a di-trans,poly-cis-dolichyl phosphate + H(+). The catalysed reaction is octyl beta-D-glucose + chenodeoxycholate = beta-D-glucosyl-(1-&gt;3)-O-chenodeoxycholate + octan-1-ol. The enzyme catalyses cholesteryl 3-beta-D-glucoside + H2O = cholesterol + D-glucose. It carries out the reaction a beta-D-glucosyl-(1&lt;-&gt;1')-N-acylsphing-4-enine + cholesterol = cholesteryl 3-beta-D-glucoside + an N-acylsphing-4-enine. It catalyses the reaction beta-D-glucosyl-N-(9Z-octadecenoyl)-sphing-4E-enine + cholesterol = N-(9Z-octadecenoyl)-sphing-4-enine + cholesteryl 3-beta-D-glucoside. The catalysed reaction is a beta-D-galactosyl-(1&lt;-&gt;1')-N-acylsphing-4-enine + cholesterol = cholesteryl 3-beta-D-galactoside + an N-acylsphing-4-enine. The enzyme catalyses 1-(beta-D-galactosyl)-N-dodecanoylsphing-4-enine + cholesterol = cholesteryl 3-beta-D-galactoside + N-dodecanoylsphing-4-enine. It participates in lipid metabolism; sphingolipid metabolism. The protein operates within steroid metabolism; cholesterol metabolism. Its activity is regulated as follows. Enzymatic activity is dependent on membrane association and requires the presence of lipids. Functionally, non-lysosomal glucosylceramidase that catalyzes the hydrolysis of glucosylceramides/GlcCers (such as beta-D-glucosyl-(1&lt;-&gt;1')-N-acylsphing-4-enine) to free glucose and ceramides (such as N-acylsphing-4-enine). GlcCers are membrane glycosphingolipids that have a wide intracellular distribution. They are the main precursors of more complex glycosphingolipids that play a role in cellular growth, differentiation, adhesion, signaling, cytoskeletal dynamics and membrane properties. Involved in the transglucosylation of cholesterol, transfers glucose from GlcCer to cholesterol, thereby modifying its water solubility and biological properties. Under specific conditions, may catalyze the reverse reaction, transferring glucose from cholesteryl-3-beta-D-glucoside to ceramide (such as N-acylsphing-4-enine). May play a role in the metabolism of bile acids. Able to hydrolyze bile acid 3-O-glucosides as well as to produce bile acid-glucose conjugates thanks to a bile acid glucosyl transferase activity. Catalyzes the hydrolysis of galactosylceramides/GalCers (such as beta-D-galactosyl-(1&lt;-&gt;1')-N-acylsphing-4-enine), as well as the galactosyl transfer between GalCers and cholesterol in vitro with lower activity compared with their activity against GlcCers. The chain is Non-lysosomal glucosylceramidase from Rattus norvegicus (Rat).